Reading from the N-terminus, the 252-residue chain is LexA repressor (252 aa).

The segment at M1 to R46 is disordered. Positions I67 to K87 form a DNA-binding region, H-T-H motif. Active-site for autocatalytic cleavage activity residues include S176 and K213.

It belongs to the peptidase S24 family. Homodimer.

The enzyme catalyses Hydrolysis of Ala-|-Gly bond in repressor LexA.. Its function is as follows. Represses a number of genes involved in the response to DNA damage (SOS response), including recA and lexA. In the presence of single-stranded DNA, RecA interacts with LexA causing an autocatalytic cleavage which disrupts the DNA-binding part of LexA, leading to derepression of the SOS regulon and eventually DNA repair. The protein is LexA repressor of Thermobifida fusca (strain YX).